A 285-amino-acid polypeptide reads, in one-letter code: Glutamate racemase (285 aa).

Residues 28–29 (DS) and 60–61 (YG) each bind substrate. Catalysis depends on Cys92, which acts as the Proton donor/acceptor. A substrate-binding site is contributed by 93 to 94 (NT). Cys204 acts as the Proton donor/acceptor in catalysis. Residue 205 to 206 (TH) coordinates substrate.

The protein belongs to the aspartate/glutamate racemases family.

The enzyme catalyses L-glutamate = D-glutamate. It participates in cell wall biogenesis; peptidoglycan biosynthesis. Its function is as follows. Provides the (R)-glutamate required for cell wall biosynthesis. This Escherichia coli O7:K1 (strain IAI39 / ExPEC) protein is Glutamate racemase.